The chain runs to 34 residues: Photosystem II reaction center protein M (34 aa).

The chain crosses the membrane as a helical span at residues 7–27; it reads GFVASLLFILVPAIFLIVLYI.

This sequence belongs to the PsbM family. As to quaternary structure, PSII is composed of 1 copy each of membrane proteins PsbA, PsbB, PsbC, PsbD, PsbE, PsbF, PsbH, PsbI, PsbJ, PsbK, PsbL, PsbM, PsbT, PsbX, PsbY, PsbZ, Psb30/Ycf12, peripheral proteins PsbO, CyanoQ (PsbQ), PsbU, PsbV and a large number of cofactors. It forms dimeric complexes.

Its subcellular location is the cellular thylakoid membrane. One of the components of the core complex of photosystem II (PSII). PSII is a light-driven water:plastoquinone oxidoreductase that uses light energy to abstract electrons from H(2)O, generating O(2) and a proton gradient subsequently used for ATP formation. It consists of a core antenna complex that captures photons, and an electron transfer chain that converts photonic excitation into a charge separation. This subunit is found at the monomer-monomer interface. This Parasynechococcus marenigrum (strain WH8102) protein is Photosystem II reaction center protein M.